The following is a 108-amino-acid chain: ATP synthase peripheral stalk subunit F6, mitochondrial (108 aa).

The transit peptide at 1–32 directs the protein to the mitochondrion; it reads MTVQRIFRLSSVLRSAVSVHLRRNIGVTAVAF. K41, K46, and K79 each carry N6-acetyllysine. 2 positions are modified to N6-acetyllysine; alternate: K84 and K99. N6-succinyllysine; alternate is present on residues K84 and K99. At K105 the chain carries N6-acetyllysine. S108 carries the phosphoserine modification.

The protein belongs to the eukaryotic ATPase subunit F6 family. In terms of assembly, component of the ATP synthase complex composed at least of ATP5F1A/subunit alpha, ATP5F1B/subunit beta, ATP5MC1/subunit c (homooctomer), MT-ATP6/subunit a, MT-ATP8/subunit 8, ATP5ME/subunit e, ATP5MF/subunit f, ATP5MG/subunit g, ATP5MK/subunit k, ATP5MJ/subunit j, ATP5F1C/subunit gamma, ATP5F1D/subunit delta, ATP5F1E/subunit epsilon, ATP5PF/subunit F6, ATP5PB/subunit b, ATP5PD/subunit d, ATP5PO/subunit OSCP. ATP synthase complex consists of a soluble F(1) head domain (subunits alpha(3) and beta(3)) - the catalytic core - and a membrane F(0) domain - the membrane proton channel (subunits c, a, 8, e, f, g, k and j). These two domains are linked by a central stalk (subunits gamma, delta, and epsilon) rotating inside the F1 region and a stationary peripheral stalk (subunits F6, b, d, and OSCP).

Its subcellular location is the mitochondrion. It is found in the mitochondrion inner membrane. In terms of biological role, subunit F6, of the mitochondrial membrane ATP synthase complex (F(1)F(0) ATP synthase or Complex V) that produces ATP from ADP in the presence of a proton gradient across the membrane which is generated by electron transport complexes of the respiratory chain. ATP synthase complex consist of a soluble F(1) head domain - the catalytic core - and a membrane F(1) domain - the membrane proton channel. These two domains are linked by a central stalk rotating inside the F(1) region and a stationary peripheral stalk. During catalysis, ATP synthesis in the catalytic domain of F(1) is coupled via a rotary mechanism of the central stalk subunits to proton translocation. In vivo, can only synthesize ATP although its ATP hydrolase activity can be activated artificially in vitro. Part of the complex F(0) domain. Part of the complex F(0) domain and the peripheric stalk, which acts as a stator to hold the catalytic alpha(3)beta(3) subcomplex and subunit a/ATP6 static relative to the rotary elements. The protein is ATP synthase peripheral stalk subunit F6, mitochondrial of Rattus norvegicus (Rat).